The chain runs to 177 residues: ATP synthase subunit delta (177 aa).

The protein belongs to the ATPase delta chain family. As to quaternary structure, F-type ATPases have 2 components, F(1) - the catalytic core - and F(0) - the membrane proton channel. F(1) has five subunits: alpha(3), beta(3), gamma(1), delta(1), epsilon(1). F(0) has three main subunits: a(1), b(2) and c(10-14). The alpha and beta chains form an alternating ring which encloses part of the gamma chain. F(1) is attached to F(0) by a central stalk formed by the gamma and epsilon chains, while a peripheral stalk is formed by the delta and b chains.

Its subcellular location is the cell inner membrane. In terms of biological role, f(1)F(0) ATP synthase produces ATP from ADP in the presence of a proton or sodium gradient. F-type ATPases consist of two structural domains, F(1) containing the extramembraneous catalytic core and F(0) containing the membrane proton channel, linked together by a central stalk and a peripheral stalk. During catalysis, ATP synthesis in the catalytic domain of F(1) is coupled via a rotary mechanism of the central stalk subunits to proton translocation. Its function is as follows. This protein is part of the stalk that links CF(0) to CF(1). It either transmits conformational changes from CF(0) to CF(1) or is implicated in proton conduction. In Shewanella putrefaciens (strain CN-32 / ATCC BAA-453), this protein is ATP synthase subunit delta.